A 296-amino-acid polypeptide reads, in one-letter code: Cytidine deaminase (296 aa).

2 CMP/dCMP-type deaminase domains span residues 47-167 (ELNE…FGPS) and 186-296 (DSND…VEPE). 88–90 (NIE) lines the substrate pocket. A Zn(2+)-binding site is contributed by histidine 101. Glutamate 103 functions as the Proton donor in the catalytic mechanism. Zn(2+) contacts are provided by cysteine 128 and cysteine 131.

Belongs to the cytidine and deoxycytidylate deaminase family. Homodimer. Zn(2+) serves as cofactor.

It carries out the reaction cytidine + H2O + H(+) = uridine + NH4(+). It catalyses the reaction 2'-deoxycytidine + H2O + H(+) = 2'-deoxyuridine + NH4(+). This enzyme scavenges exogenous and endogenous cytidine and 2'-deoxycytidine for UMP synthesis. This is Cytidine deaminase from Shewanella pealeana (strain ATCC 700345 / ANG-SQ1).